The primary structure comprises 1007 residues: Exportin-7 (1007 aa).

It belongs to the exportin family.

The protein resides in the nucleus. The protein localises to the cytoplasm. Its subcellular location is the nuclear pore complex. Mediates the nuclear export of proteins (cargos) with broad substrate specificity. In Dictyostelium discoideum (Social amoeba), this protein is Exportin-7 (xpo7).